Consider the following 654-residue polypeptide: Import motor subunit, mitochondrial (654 aa).

A mitochondrion-targeting transit peptide spans 1 to 23; sequence MLAAKNILNRSSLSSSFRIATRL. T330 carries the phosphothreonine modification. The disordered stretch occupies residues 629-654; it reads EQLYKNDSNNNNNNNGNNAESGETKQ. Low complexity predominate over residues 637–646; sequence NNNNNNNGNN.

It belongs to the heat shock protein 70 family. In terms of assembly, component of the PAM complex, at least composed of SSC1 (mtHsp70), MGE1, TIM44, PAM16/TIM16, PAM17 and PAM18/TIM14. In the complex, SSC1 interacts directly with PAM18 and TIM44. Interacts with NAP1.

It is found in the mitochondrion matrix. The enzyme catalyses ATP + H2O = ADP + phosphate + H(+). Essential component of the PAM complex, a complex required for the translocation of transit peptide-containing proteins from the inner membrane into the mitochondrial matrix in an ATP-dependent manner. Constitutes the ATP-driven core of the motor and binds the precursor preprotein. Required for the import of the processed frataxin homolog YFH1 into the mitochondrion. The polypeptide is Import motor subunit, mitochondrial (Saccharomyces cerevisiae (strain ATCC 204508 / S288c) (Baker's yeast)).